We begin with the raw amino-acid sequence, 153 residues long: Endoribonuclease YbeY (153 aa).

Residues His-118, His-122, and His-128 each coordinate Zn(2+).

This sequence belongs to the endoribonuclease YbeY family. Zn(2+) serves as cofactor.

The protein resides in the cytoplasm. Single strand-specific metallo-endoribonuclease involved in late-stage 70S ribosome quality control and in maturation of the 3' terminus of the 16S rRNA. The sequence is that of Endoribonuclease YbeY from Staphylococcus haemolyticus (strain JCSC1435).